The chain runs to 113 residues: Large ribosomal subunit protein uL22 (113 aa).

It belongs to the universal ribosomal protein uL22 family. Part of the 50S ribosomal subunit.

Its function is as follows. This protein binds specifically to 23S rRNA; its binding is stimulated by other ribosomal proteins, e.g. L4, L17, and L20. It is important during the early stages of 50S assembly. It makes multiple contacts with different domains of the 23S rRNA in the assembled 50S subunit and ribosome. The globular domain of the protein is located near the polypeptide exit tunnel on the outside of the subunit, while an extended beta-hairpin is found that lines the wall of the exit tunnel in the center of the 70S ribosome. This is Large ribosomal subunit protein uL22 from Solibacter usitatus (strain Ellin6076).